A 101-amino-acid chain; its full sequence is UPF0125 protein VC_0850 (101 aa).

This sequence belongs to the UPF0125 (RnfH) family.

The polypeptide is UPF0125 protein VC_0850 (Vibrio cholerae serotype O1 (strain ATCC 39315 / El Tor Inaba N16961)).